The primary structure comprises 486 residues: Wax ester synthase/diacylglycerol acyltransferase 11 (486 aa).

The Cytoplasmic portion of the chain corresponds to 1–192 (MGEDKKTARE…CNSGFFNKIW (192 aa)). Histidine 144 serves as the catalytic Proton acceptor. Residues 193–213 (WLFVGLWFILRLLFNTFVDIL) form a helical membrane-spanning segment. The Extracellular portion of the chain corresponds to 214-486 (MFALTIFVLR…LERGLYEIEV (273 aa)).

It in the N-terminal section; belongs to the long-chain O-acyltransferase family. In terms of tissue distribution, mostly expressed in inflorescences and flowers, especially at the periphery of petal epidermal cells.

It is found in the cell membrane. It localises to the endoplasmic reticulum membrane. It catalyses the reaction an acyl-CoA + a 1,2-diacyl-sn-glycerol = a triacyl-sn-glycerol + CoA. The enzyme catalyses a long chain fatty alcohol + a fatty acyl-CoA = a wax ester + CoA. It participates in glycerolipid metabolism; triacylglycerol biosynthesis. It functions in the pathway lipid metabolism. Functionally, bifunctional wax ester synthase/diacylglycerol acyltransferase. Involved in cuticular wax biosynthesis. Required for petals development, probably by mediating the production of fatty acids at the plasma membrane in the petal epidermis acting as lubricants that makes petal elongation smooth in narrow space between the sepals and the anthers inside floral buds. This is Wax ester synthase/diacylglycerol acyltransferase 11 from Arabidopsis thaliana (Mouse-ear cress).